The sequence spans 1021 residues: Putative 115 kDa protein in type-1 retrotransposable element R1DM (1021 aa).

In terms of domain architecture, Reverse transcriptase spans Arg479 to Val741. Positions Cys955 to Cys971 are gag-like cysteine motif.

The polypeptide is Putative 115 kDa protein in type-1 retrotransposable element R1DM (R1A1-element\ORF2) (Drosophila melanogaster (Fruit fly)).